A 343-amino-acid polypeptide reads, in one-letter code: MRN complex-interacting protein (343 aa).

Positions 75–104 (EETVSASEEENVGHQQAGNVKQQEKSQPSE) are disordered. Residues 87-104 (GHQQAGNVKQQEKSQPSE) are compositionally biased toward polar residues. A phosphoserine mark is found at serine 100 and serine 115. 3 disordered regions span residues 128–178 (SKQP…WGPQ), 193–212 (SPCL…RGPG), and 230–324 (AQFV…AQNP). The Nuclear localization signal (NLS) signature appears at 148–151 (RKRK). Over residues 193–202 (SPCLQENSAD) the composition is skewed to polar residues. The interval 213–237 (KELWSPIQQVTATSSKWAQFVLPPR) is necessary for the association with the MRN complex. A compositionally biased stretch (basic and acidic residues) spans 240 to 255 (SHVDSEQPRSLQRDPR).

This sequence belongs to the MRNIP family. Associates with the MRE11-RAD50-NBN (MRN) damage-sensing complex; this association is constitutive. Interacts with MRE11. Interacts with NBN. Interacts with RAD50. In terms of processing, phosphorylated; phosphorylation is constitutive and occurs in the absence of any DNA-damaging stimulus. Phosphorylation on Ser-115 is necessary for its nuclear retention.

It is found in the nucleus. The protein resides in the nucleoplasm. In terms of biological role, plays a role in the cellular response to DNA damage and the maintenance of genome stability through its association with the MRN damage-sensing complex. Promotes chromatin loading and activity of the MRN complex to facilitate subsequent ATM-mediated DNA damage response signaling and DNA repair. The polypeptide is MRN complex-interacting protein (Homo sapiens (Human)).